Reading from the N-terminus, the 100-residue chain is Envelope glycoprotein N (100 aa).

An N-terminal signal peptide occupies residues 1-27 (MLSTRFVTLAILACLLVVLGLARGAGG). At 28–63 (DPGVKQRIDVAREEERRDFWHAACSGHGFPITTPST) the chain is on the virion surface side. A helical membrane pass occupies residues 64-84 (AAILFYVSLLAVGVAVACQAY). The Intravirion segment spans residues 85–100 (RAVLRIVTLEMLQHLH).

This sequence belongs to the herpesviridae glycoprotein N family. As to quaternary structure, interacts (via N-terminus) with gM (via N-terminus). The gM-gN heterodimer forms the gCII complex.

The protein resides in the virion membrane. It localises to the host membrane. Its subcellular location is the host Golgi apparatus. It is found in the host trans-Golgi network. Envelope glycoprotein necessary for proper maturation of gM and modulation of its membrane fusion activity. Also plays a critical role in virion morphogenesis. The polypeptide is Envelope glycoprotein N (Equus caballus (Horse)).